A 783-amino-acid chain; its full sequence is Protein SEY1 (783 aa).

Residues 1 to 677 (MTSQAIQLID…KRSIVTSSTH (677 aa)) are Cytoplasmic-facing. The 233-residue stretch at 33 to 265 (GFNYHVISVF…YLLKPNYHHK (233 aa)) folds into the GB1/RHD3-type G domain. GTP is bound at residue 43-50 (GSQSSGKS). A coiled-coil region spans residues 449–472 (HEKKLQLRESELNALLSKIKKQLT). A helical transmembrane segment spans residues 678–698 (IPIWIYAVIVVLGWNEFMIVI). Residues 699 to 701 (RNP) lie on the Lumenal side of the membrane. Residues 702-722 (LFVTLALLSIVSFYFIQKFGL) traverse the membrane as a helical segment. The Cytoplasmic portion of the chain corresponds to 723–783 (WGPVMNVVNT…SSSSGNEDSD (61 aa)).

Belongs to the TRAFAC class dynamin-like GTPase superfamily. GB1/RHD3 GTPase family. RHD3 subfamily.

It is found in the endoplasmic reticulum membrane. Cooperates with the reticulon proteins and tubule-shaping DP1 family proteins to generate and maintain the structure of the tubular endoplasmic reticulum network. Has GTPase activity, which is required for its function in ER organization. The protein is Protein SEY1 of Candida glabrata (strain ATCC 2001 / BCRC 20586 / JCM 3761 / NBRC 0622 / NRRL Y-65 / CBS 138) (Yeast).